A 495-amino-acid polypeptide reads, in one-letter code: Glycerol kinase (495 aa).

Threonine 13 is an ADP binding site. The ATP site is built by threonine 13, threonine 14, and serine 15. Threonine 13 contacts sn-glycerol 3-phosphate. Position 17 (arginine 17) interacts with ADP. Sn-glycerol 3-phosphate is bound by residues arginine 83, glutamate 84, tyrosine 135, and aspartate 244. Residues arginine 83, glutamate 84, tyrosine 135, aspartate 244, and glutamine 245 each contribute to the glycerol site. Positions 266 and 309 each coordinate ADP. Positions 266, 309, 313, and 410 each coordinate ATP. ADP contacts are provided by glycine 410 and asparagine 414.

The protein belongs to the FGGY kinase family.

The enzyme catalyses glycerol + ATP = sn-glycerol 3-phosphate + ADP + H(+). Its pathway is polyol metabolism; glycerol degradation via glycerol kinase pathway; sn-glycerol 3-phosphate from glycerol: step 1/1. Inhibited by fructose 1,6-bisphosphate (FBP). Functionally, key enzyme in the regulation of glycerol uptake and metabolism. Catalyzes the phosphorylation of glycerol to yield sn-glycerol 3-phosphate. This is Glycerol kinase from Shewanella amazonensis (strain ATCC BAA-1098 / SB2B).